Reading from the N-terminus, the 132-residue chain is MALLLTAVIVLICFGGLTSPSPVPSATALKELIEELVNITQNQKVPLCNGSMVWSLNLTSSMYCAALDSLISISNCSVIQRTKRMLNALCPHKPSAKQVSSEYVRDTKIEVAQFLKDLLRHSRIVFRNERFN.

Positions 1-18 are cleaved as a signal peptide; that stretch reads MALLLTAVIVLICFGGLT. N-linked (GlcNAc...) asparagine glycosylation is found at N38, N49, N57, and N75. Cystine bridges form between C48–C76 and C64–C90.

It belongs to the IL-4/IL-13 family. In terms of assembly, interacts with IL13RA2.

Its subcellular location is the secreted. Its function is as follows. Cytokine that plays important roles in allergic inflammation and immune response to parasite infection. Synergizes with IL2 in regulating interferon-gamma synthesis. Stimulates B-cell proliferation, and activation of eosinophils, basophils, and mast cells. Plays an important role in controlling IL33 activity by modulating the production of transmembrane and soluble forms of interleukin-1 receptor-like 1/IL1RL1. Displays the capacity to antagonize Th1-driven proinflammatory immune response and downregulates synthesis of many proinflammatory cytokines including IL1, IL6, IL10, IL12 and TNF-alpha through a mechanism that partially involves suppression of NF-kappa-B. Also functions on nonhematopoietic cells, including endothelial cells where it induces vascular cell adhesion protein 1/VCAM1, which is important in the recruitment of eosinophils. Exerts its biological effects through its receptors which comprises the IL4R chain and the IL13RA1 chain, to activate JAK1 and TYK2, leading to the activation of STAT6. Aside from IL13RA1, another receptor IL13RA2 acts as a high affinity decoy for IL13 and mediates internalization and depletion of extracellular IL13. This chain is Interleukin-13 (IL13), found in Bos taurus (Bovine).